The chain runs to 224 residues: Ribosome maturation factor RimM (224 aa).

Residues M1 to P12 are compositionally biased toward low complexity. Disordered stretches follow at residues M1–V46 and V204–G224. Residues E137–L211 enclose the PRC barrel domain.

Belongs to the RimM family. In terms of assembly, binds ribosomal protein uS19.

The protein localises to the cytoplasm. Its function is as follows. An accessory protein needed during the final step in the assembly of 30S ribosomal subunit, possibly for assembly of the head region. Essential for efficient processing of 16S rRNA. May be needed both before and after RbfA during the maturation of 16S rRNA. It has affinity for free ribosomal 30S subunits but not for 70S ribosomes. The sequence is that of Ribosome maturation factor RimM from Methylorubrum populi (strain ATCC BAA-705 / NCIMB 13946 / BJ001) (Methylobacterium populi).